Consider the following 251-residue polypeptide: uncharacterized protein (251 aa).

Residues 1-25 (MSAGRLNKKSLGIVMLLSVGLLLAG) form the signal peptide. Residue Cys-26 is the site of N-palmitoyl cysteine attachment. Residue Cys-26 is the site of S-diacylglycerol cysteine attachment. Positions 40 to 84 (SVYTVKRGDTLYRISRTTGTSVKELARLNGISPPYTIEVGQKLKL) constitute a LysM domain. Residues 93–112 (TRKSTAKSTTKTASVTPSSA) show a composition bias toward low complexity. A disordered region spans residues 93 to 115 (TRKSTAKSTTKTASVTPSSAVPK).

It belongs to the peptidase M23B family.

It is found in the cell inner membrane. This is an uncharacterized protein from Escherichia coli (strain K12).